Reading from the N-terminus, the 317-residue chain is Melanocyte-stimulating hormone receptor (317 aa).

At 1-37 (MPALGSPRRLLGSLNCTPPATLPLTLAPNRTGPQCLE) the chain is on the extracellular side. Residue N29 is glycosylated (N-linked (GlcNAc...) asparagine). A helical membrane pass occupies residues 38 to 63 (VSIPDGLFLSLGLVSLVENVLVVAAI). Residues 64–72 (AKNRNLHSP) lie on the Cytoplasmic side of the membrane. Residues 73–93 (MYYFICCLAMSDLLVSVSNVL) traverse the membrane as a helical segment. At 94–118 (ETAVMLLLEAGVLATRAAVVQQLDN) the chain is on the extracellular side. A helical membrane pass occupies residues 119–140 (VIDVLICSSMVSSLCFLGAIAV). Topologically, residues 141–163 (DRYISIFYALRYHSVVTLPRAWR) are cytoplasmic. The helical transmembrane segment at 164–183 (IIAAIWVASILTSVLSITYY) threads the bilayer. The Extracellular segment spans residues 184–191 (NHTVVLLC). The helical transmembrane segment at 192–211 (LVGFFIAMLALMAVLYVHML) threads the bilayer. Topologically, residues 212 to 240 (ARACQHARGIARLQKRQRPIHQGFGLKGA) are cytoplasmic. Residues 241-266 (ATLTILLGVFFLCWGPFFLHLSLIVL) traverse the membrane as a helical segment. Over 267 to 279 (CPQHPTCGCIFKN) the chain is Extracellular. Residues 280–300 (FNLFLALIICNAIVDPLIYAF) traverse the membrane as a helical segment. Over 301 to 317 (RSQELRKTLQEVLQCSW) the chain is Cytoplasmic. Residue C315 is the site of S-palmitoyl cysteine attachment.

It belongs to the G-protein coupled receptor 1 family. In terms of assembly, interacts with MGRN1, but does not undergo MGRN1-mediated ubiquitination; this interaction competes with GNAS-binding and thus inhibits agonist-induced cAMP production. Interacts with OPN3; the interaction results in a decrease in MC1R-mediated cAMP signaling and ultimately a decrease in melanin production in melanocytes.

It localises to the cell membrane. Receptor for MSH (alpha, beta and gamma) and ACTH. The activity of this receptor is mediated by G proteins which activate adenylate cyclase. Mediates melanogenesis, the production of eumelanin (black/brown) and phaeomelanin (red/yellow), via regulation of cAMP signaling in melanocytes. The protein is Melanocyte-stimulating hormone receptor (MC1R) of Capra hircus (Goat).